A 341-amino-acid polypeptide reads, in one-letter code: MSTDKTDVKMGVLRIYLDGAYGIGKTTAAEEFLHHFAITPNRILLIGEPLSYWRNLAGEDAICGIYGTQTRRLNGDVSPEDAQRLTAHFQSLFCSPHAIMHAKISALMDTSTSDLVQVNKEPYKIMLSDRHPIASTICFPLSRYLVGDMSPAALPGLLFTLPAEPPGTNLVVCTVSLPSHLSRVSKRARPGETVNLPFVMVLRNVYIMLINTIIFLKTNNWHAGWNTLSFCNDVFKQKLQKSECIKLREVPGIEDTLFAVLKLPELCGEFGNILPLWAWGMETLSNCSRSMSPFVLSLEQTPQHAAQELKTLLPQMTPANMSSGAWNILKELVNAVQDNTS.

Gly-19–Thr-26 serves as a coordination point for ATP. Catalysis depends on Glu-48, which acts as the Proton acceptor. Tyr-66 and Gln-90 together coordinate substrate. Arg-183 is an ATP binding site. Arg-189 contacts substrate.

It belongs to the herpesviridae thymidine kinase family. In terms of assembly, homodimer.

The catalysed reaction is thymidine + ATP = dTMP + ADP + H(+). In terms of biological role, catalyzes the transfer of the gamma-phospho group of ATP to thymidine to generate dTMP in the salvage pathway of pyrimidine synthesis. The dTMP serves as a substrate for DNA polymerase during viral DNA replication. Allows the virus to be reactivated and to grow in non-proliferative cells lacking a high concentration of phosphorylated nucleic acid precursors. The chain is Thymidine kinase from Varicella-zoster virus (strain Dumas) (HHV-3).